We begin with the raw amino-acid sequence, 147 residues long: Flagellar assembly factor FliW (147 aa).

It belongs to the FliW family. As to quaternary structure, interacts with translational regulator CsrA and flagellin(s).

The protein localises to the cytoplasm. Its function is as follows. Acts as an anti-CsrA protein, binds CsrA and prevents it from repressing translation of its target genes, one of which is flagellin. Binds to flagellin and participates in the assembly of the flagellum. The protein is Flagellar assembly factor FliW of Oceanobacillus iheyensis (strain DSM 14371 / CIP 107618 / JCM 11309 / KCTC 3954 / HTE831).